The primary structure comprises 364 residues: Cobalt-precorrin-5B C(1)-methyltransferase (364 aa).

The protein belongs to the CbiD family.

The catalysed reaction is Co-precorrin-5B + S-adenosyl-L-methionine = Co-precorrin-6A + S-adenosyl-L-homocysteine. The protein operates within cofactor biosynthesis; adenosylcobalamin biosynthesis; cob(II)yrinate a,c-diamide from sirohydrochlorin (anaerobic route): step 6/10. Catalyzes the methylation of C-1 in cobalt-precorrin-5B to form cobalt-precorrin-6A. In Pseudomonas putida (strain ATCC 47054 / DSM 6125 / CFBP 8728 / NCIMB 11950 / KT2440), this protein is Cobalt-precorrin-5B C(1)-methyltransferase.